We begin with the raw amino-acid sequence, 701 residues long: Octapeptide-repeat antigen (701 aa).

N-linked (GlcNAc...) asparagine glycosylation is found at Asn40, Asn41, Asn76, Asn111, Asn127, Asn139, Asn181, Asn189, Asn311, Asn334, Asn344, Asn477, and Asn557. The interval 120 to 140 is disordered; sequence IENEEKSNGSRKSSNKQKYNE. The interval 641–701 is disordered; the sequence is LSGSSTGSMN…IKSGSKDHIK (61 aa). Low complexity predominate over residues 642 to 655; the sequence is SGSSTGSMNNGKSG. 6 tandem repeats follow at residues 653–660, 661–668, 669–676, 677–684, 685–692, and 693–700. The tract at residues 653–700 is 6 X 8 AA approximate tandem repeats; it reads KSGSKSDIKGGSKDDIKSGSKDDIKSGSKADIKSGSKDDIKSGSKDHI. The segment covering 656-701 has biased composition (basic and acidic residues); that stretch reads SKSDIKGGSKDDIKSGSKDDIKSGSKADIKSGSKDDIKSGSKDHIK.

This sequence belongs to the ATP-dependent AMP-binding enzyme family.

Its subcellular location is the parasitophorous vacuole. The sequence is that of Octapeptide-repeat antigen from Plasmodium falciparum (isolate NF7 / Ghana).